The primary structure comprises 864 residues: Leucine--tRNA ligase (864 aa).

The 'HIGH' region motif lies at 40–51; sequence PYPSGAGLHVGH. The 'KMSKS' region motif lies at 636 to 640; sequence KMSKS. Residue lysine 639 participates in ATP binding.

This sequence belongs to the class-I aminoacyl-tRNA synthetase family.

It localises to the cytoplasm. It carries out the reaction tRNA(Leu) + L-leucine + ATP = L-leucyl-tRNA(Leu) + AMP + diphosphate. The sequence is that of Leucine--tRNA ligase from Leptospira borgpetersenii serovar Hardjo-bovis (strain JB197).